A 326-amino-acid chain; its full sequence is MSRVEPIKKVSVVIPVYNEQESLPALLERTTAACKQLTQPYEIILVDDGSSDNSADMLTAAAEQPGSCVIAVLLNRNYGQHSAIMAGFNQVSGDLVITLDADLQNPPEEIPRLVKVAEEGYDVVGTVRANRQDSWFRKSASRIINMMIQRATGKSMGDYGCMLRAYRRHIIEAMLNCHERSTFIPILANTFARRTTEIEVLHAEREFGDSKYSLMKLINLMYDLITCLTTTPLRLLSVVGSVVALSGFLLAVLLIALRLIMGPEWSGGGVFTLFAVLFTFIGAQFVGMGLLGEYIGRIYTDVRARPRYFVQKVVGEQPNHNTQEEE.

2 consecutive transmembrane segments (helical) span residues 235-255 (LLSV…VLLI) and 270-290 (VFTL…GMGL).

The protein belongs to the glycosyltransferase 2 family.

It is found in the cell inner membrane. The catalysed reaction is UDP-4-deoxy-4-formamido-beta-L-arabinose + di-trans,octa-cis-undecaprenyl phosphate = 4-deoxy-4-formamido-alpha-L-arabinopyranosyl di-trans,octa-cis-undecaprenyl phosphate + UDP. Its pathway is glycolipid biosynthesis; 4-amino-4-deoxy-alpha-L-arabinose undecaprenyl phosphate biosynthesis; 4-amino-4-deoxy-alpha-L-arabinose undecaprenyl phosphate from UDP-4-deoxy-4-formamido-beta-L-arabinose and undecaprenyl phosphate: step 1/2. It participates in bacterial outer membrane biogenesis; lipopolysaccharide biosynthesis. Functionally, catalyzes the transfer of 4-deoxy-4-formamido-L-arabinose from UDP to undecaprenyl phosphate. The modified arabinose is attached to lipid A and is required for resistance to polymyxin and cationic antimicrobial peptides. This chain is Undecaprenyl-phosphate 4-deoxy-4-formamido-L-arabinose transferase, found in Serratia proteamaculans (strain 568).